The sequence spans 152 residues: Transcriptional regulator MraZ (152 aa).

SpoVT-AbrB domains lie at alanine 5 to glutamate 52 and alanine 81 to threonine 124.

It belongs to the MraZ family. As to quaternary structure, forms oligomers.

The protein localises to the cytoplasm. It is found in the nucleoid. Functionally, negatively regulates its own expression and that of the subsequent genes in the proximal part of the division and cell wall (dcw) gene cluster. Acts by binding directly to DNA. May also regulate the expression of genes outside the dcw cluster. The chain is Transcriptional regulator MraZ from Pectobacterium atrosepticum (strain SCRI 1043 / ATCC BAA-672) (Erwinia carotovora subsp. atroseptica).